An 87-amino-acid chain; its full sequence is Probable Fe(2+)-trafficking protein (87 aa).

The protein belongs to the Fe(2+)-trafficking protein family.

Its function is as follows. Could be a mediator in iron transactions between iron acquisition and iron-requiring processes, such as synthesis and/or repair of Fe-S clusters in biosynthetic enzymes. The protein is Probable Fe(2+)-trafficking protein of Francisella tularensis subsp. novicida (strain U112).